Consider the following 342-residue polypeptide: Tetraacyldisaccharide 4'-kinase (342 aa).

Residue 68–75 (TVGGTGKT) coordinates ATP.

This sequence belongs to the LpxK family.

The catalysed reaction is a lipid A disaccharide + ATP = a lipid IVA + ADP + H(+). It functions in the pathway glycolipid biosynthesis; lipid IV(A) biosynthesis; lipid IV(A) from (3R)-3-hydroxytetradecanoyl-[acyl-carrier-protein] and UDP-N-acetyl-alpha-D-glucosamine: step 6/6. Functionally, transfers the gamma-phosphate of ATP to the 4'-position of a tetraacyldisaccharide 1-phosphate intermediate (termed DS-1-P) to form tetraacyldisaccharide 1,4'-bis-phosphate (lipid IVA). The protein is Tetraacyldisaccharide 4'-kinase of Burkholderia multivorans (strain ATCC 17616 / 249).